We begin with the raw amino-acid sequence, 29 residues long: Dermaseptin-S5 (29 aa).

It belongs to the frog skin active peptide (FSAP) family. Dermaseptin subfamily. As to expression, expressed by the skin glands.

It is found in the secreted. Its function is as follows. Potent antimicrobial peptide with activity against bacteria and protozoa. Also has activity against fungi. Probably acts by disturbing membrane functions with its amphipathic structure. This chain is Dermaseptin-S5, found in Phyllomedusa sauvagei (Sauvage's leaf frog).